The chain runs to 188 residues: Probable nicotinate-nucleotide adenylyltransferase (188 aa).

The protein belongs to the NadD family.

It carries out the reaction nicotinate beta-D-ribonucleotide + ATP + H(+) = deamido-NAD(+) + diphosphate. It participates in cofactor biosynthesis; NAD(+) biosynthesis; deamido-NAD(+) from nicotinate D-ribonucleotide: step 1/1. Functionally, catalyzes the reversible adenylation of nicotinate mononucleotide (NaMN) to nicotinic acid adenine dinucleotide (NaAD). In Rhizobium meliloti (strain 1021) (Ensifer meliloti), this protein is Probable nicotinate-nucleotide adenylyltransferase.